The chain runs to 950 residues: Protocadherin alpha-8 (950 aa).

Residues 1-29 form the signal peptide; that stretch reads MVYHWRGDLGSWRLLLLLLLLAAWKVGSG. Cadherin domains lie at 30-133, 157-242, 243-350, 351-455, 456-565, and 581-678; these read QLHY…PPVF, ASDA…APNF, EQSE…VPEI, ALTS…APAF, AQPE…APAL, and VPRS…APKA. Over 30 to 697 the chain is Extracellular; sequence QLHYSVPEEA…GPEAALVDVN (668 aa). Residues Asn-257 and Asn-265 are each glycosylated (N-linked (GlcNAc...) asparagine). Residue Asn-548 is glycosylated (N-linked (GlcNAc...) asparagine). The chain crosses the membrane as a helical span at residues 698-718; sequence VYLIIAICAVSSLLVLTLLLY. Topologically, residues 719-950 are cytoplasmic; sequence TALRCSALPT…GNSTTDNSDQ (232 aa). PXXP repeat units follow at residues 774 to 777, 799 to 802, 832 to 835, 873 to 876, and 891 to 894; these read PCLP, PRQP, PGGP, PGNP, and PGSP. The tract at residues 774 to 894 is 5 X 4 AA repeats of P-X-X-P; that stretch reads PCLPPDLGSV…PDKFIIPGSP (121 aa). The interval 831-950 is disordered; it reads GPGGPDQQWP…GNSTTDNSDQ (120 aa). A compositionally biased stretch (basic and acidic residues) spans 909 to 923; the sequence is DKSDFITFGKKEETK.

The protein resides in the cell membrane. Its function is as follows. Potential calcium-dependent cell-adhesion protein. May be involved in the establishment and maintenance of specific neuronal connections in the brain. The polypeptide is Protocadherin alpha-8 (PCDHA8) (Pan troglodytes (Chimpanzee)).